Consider the following 87-residue polypeptide: Large ribosomal subunit protein bL27 (87 aa).

The interval 1 to 21 (MAHKKAGGSSRNGRDSESKRL) is disordered.

Belongs to the bacterial ribosomal protein bL27 family.

The polypeptide is Large ribosomal subunit protein bL27 (Burkholderia multivorans (strain ATCC 17616 / 249)).